The chain runs to 354 residues: Tryptophan--tRNA ligase (354 aa).

ATP is bound by residues 13 to 15 and 21 to 22; these read QPT and GN. Positions 14–22 match the 'HIGH' region motif; that stretch reads PTGNLHLGN. Aspartate 137 serves as a coordination point for L-tryptophan. Residues 149–151, valine 208, and 217–221 each bind ATP; these read GDD and KMSKS. Residues 217–221 carry the 'KMSKS' region motif; sequence KMSKS.

This sequence belongs to the class-I aminoacyl-tRNA synthetase family. As to quaternary structure, homodimer.

The protein localises to the cytoplasm. It catalyses the reaction tRNA(Trp) + L-tryptophan + ATP = L-tryptophyl-tRNA(Trp) + AMP + diphosphate + H(+). Catalyzes the attachment of tryptophan to tRNA(Trp). This chain is Tryptophan--tRNA ligase, found in Agrobacterium fabrum (strain C58 / ATCC 33970) (Agrobacterium tumefaciens (strain C58)).